The chain runs to 423 residues: Alpha-1-antichymotrypsin (423 aa).

The signal sequence occupies residues 1 to 23; sequence MERMLPLLALGLLAAGFCPAVLC. Residues N33, N93, N106, N127, and N186 are each glycosylated (N-linked (GlcNAc...) asparagine). A DNA-binding region spans residues 235–237; that stretch reads KKK. An N-linked (GlcNAc...) asparagine glycan is attached at N271. Residues 369–394 form an RCL region; the sequence is GTEASAATAVKITLLSALVETRTIVR. Residues 381–389 form an O-glycosylated at one site region; the sequence is TLLSALVET.

It belongs to the serpin family. In terms of assembly, interacts with DNAJC1. N- and O-glycosylated. Plasma. Synthesized in the liver. Like the related alpha-1-antitrypsin, its concentration increases in the acute phase of inflammation or infection. Found in the amyloid plaques from the hippocampus of Alzheimer disease brains.

Its subcellular location is the secreted. Functionally, although its physiological function is unclear, it can inhibit neutrophil cathepsin G and mast cell chymase, both of which can convert angiotensin-1 to the active angiotensin-2. The polypeptide is Alpha-1-antichymotrypsin (SERPINA3) (Homo sapiens (Human)).